We begin with the raw amino-acid sequence, 167 residues long: MITAVYPGTFDPLTRGHEDLVRRAAALFDKVVVAVAYSRNKKPFFNIDERVEIAREVLGHYPNVEVRSFGGLLRDFVREQNGRVIVRGLRAMSDFEYEFQMAGMNRHLLPDVETLFMTPSDQYQFISGTIVREIAQLGGDVSKFVFPSVERWLQAKAKARREQAETE.

Residue Thr9 coordinates substrate. ATP-binding positions include 9-10 (TF) and His17. Substrate-binding residues include Lys41, Leu73, and Arg87. Residues 88-90 (GLR), Glu98, and 123-129 (YQFISGT) contribute to the ATP site.

Belongs to the bacterial CoaD family. In terms of assembly, homohexamer. The cofactor is Mg(2+).

The protein localises to the cytoplasm. The catalysed reaction is (R)-4'-phosphopantetheine + ATP + H(+) = 3'-dephospho-CoA + diphosphate. It participates in cofactor biosynthesis; coenzyme A biosynthesis; CoA from (R)-pantothenate: step 4/5. Its function is as follows. Reversibly transfers an adenylyl group from ATP to 4'-phosphopantetheine, yielding dephospho-CoA (dPCoA) and pyrophosphate. This Bordetella avium (strain 197N) protein is Phosphopantetheine adenylyltransferase.